The chain runs to 268 residues: Proteasome subunit beta type-4 (268 aa).

Belongs to the peptidase T1B family. In terms of assembly, the 26S proteasome consists of a 20S proteasome core and two 19S regulatory subunits. The 20S proteasome core is composed of 28 subunits that are arranged in four stacked rings, resulting in a barrel-shaped structure. The two end rings are each formed by seven alpha subunits, and the two central rings are each formed by seven beta subunits. The catalytic chamber with the active sites is on the inside of the barrel.

It is found in the cytoplasm. The protein resides in the nucleus. Functionally, non-catalytic component of the proteasome, a multicatalytic proteinase complex which is characterized by its ability to cleave peptides with Arg, Phe, Tyr, Leu, and Glu adjacent to the leaving group at neutral or slightly basic pH. The proteasome has an ATP-dependent proteolytic activity. This is Proteasome subunit beta type-4 (Prosbeta7) from Drosophila melanogaster (Fruit fly).